A 426-amino-acid polypeptide reads, in one-letter code: D-tagatose-1,6-bisphosphate aldolase subunit KbaZ (426 aa).

It belongs to the GatZ/KbaZ family. KbaZ subfamily. As to quaternary structure, forms a complex with KbaY.

It functions in the pathway carbohydrate metabolism; D-tagatose 6-phosphate degradation; D-glyceraldehyde 3-phosphate and glycerone phosphate from D-tagatose 6-phosphate: step 2/2. Its function is as follows. Component of the tagatose-1,6-bisphosphate aldolase KbaYZ that is required for full activity and stability of the Y subunit. Could have a chaperone-like function for the proper and stable folding of KbaY. When expressed alone, KbaZ does not show any aldolase activity. The protein is D-tagatose-1,6-bisphosphate aldolase subunit KbaZ of Escherichia coli O139:H28 (strain E24377A / ETEC).